Consider the following 339-residue polypeptide: D-erythrose-4-phosphate dehydrogenase (339 aa).

Residues 12-13 and Arg-81 contribute to the NAD(+) site; that span reads RI. Residues 154-156, Arg-200, 213-214, and Arg-236 contribute to the substrate site; these read SCT and TK. Residue Cys-155 is the Nucleophile of the active site. Asn-318 contacts NAD(+).

This sequence belongs to the glyceraldehyde-3-phosphate dehydrogenase family. Epd subfamily. Homotetramer.

It localises to the cytoplasm. The catalysed reaction is D-erythrose 4-phosphate + NAD(+) + H2O = 4-phospho-D-erythronate + NADH + 2 H(+). It participates in cofactor biosynthesis; pyridoxine 5'-phosphate biosynthesis; pyridoxine 5'-phosphate from D-erythrose 4-phosphate: step 1/5. Catalyzes the NAD-dependent conversion of D-erythrose 4-phosphate to 4-phosphoerythronate. This is D-erythrose-4-phosphate dehydrogenase from Escherichia coli O45:K1 (strain S88 / ExPEC).